The primary structure comprises 871 residues: Ubiquitin carboxyl-terminal hydrolase 8 (871 aa).

The region spanning Thr-4–Gly-99 is the DUSP domain. In terms of domain architecture, USP spans Thr-279 to Leu-869. The Nucleophile role is filled by Cys-288. The disordered stretch occupies residues Glu-615–Glu-650. Catalysis depends on His-828, which acts as the Proton acceptor.

Belongs to the peptidase C19 family.

The catalysed reaction is Thiol-dependent hydrolysis of ester, thioester, amide, peptide and isopeptide bonds formed by the C-terminal Gly of ubiquitin (a 76-residue protein attached to proteins as an intracellular targeting signal).. Its function is as follows. Recognizes and hydrolyzes the peptide bond at the C-terminal Gly of ubiquitin. Involved in the processing of poly-ubiquitin precursors as well as that of ubiquitinated proteins. The chain is Ubiquitin carboxyl-terminal hydrolase 8 (UBP8) from Arabidopsis thaliana (Mouse-ear cress).